We begin with the raw amino-acid sequence, 439 residues long: 3-phosphoshikimate 1-carboxyvinyltransferase (439 aa).

3-phosphoshikimate-binding residues include lysine 25, serine 26, and arginine 30. A phosphoenolpyruvate-binding site is contributed by lysine 25. Residues glycine 96 and arginine 124 each coordinate phosphoenolpyruvate. Residues serine 170, serine 171, glutamine 172, serine 202, aspartate 324, and lysine 351 each coordinate 3-phosphoshikimate. Glutamine 172 contributes to the phosphoenolpyruvate binding site. The active-site Proton acceptor is the aspartate 324. Arginine 355, arginine 399, and lysine 424 together coordinate phosphoenolpyruvate.

Belongs to the EPSP synthase family. In terms of assembly, monomer.

Its subcellular location is the cytoplasm. The enzyme catalyses 3-phosphoshikimate + phosphoenolpyruvate = 5-O-(1-carboxyvinyl)-3-phosphoshikimate + phosphate. The protein operates within metabolic intermediate biosynthesis; chorismate biosynthesis; chorismate from D-erythrose 4-phosphate and phosphoenolpyruvate: step 6/7. Catalyzes the transfer of the enolpyruvyl moiety of phosphoenolpyruvate (PEP) to the 5-hydroxyl of shikimate-3-phosphate (S3P) to produce enolpyruvyl shikimate-3-phosphate and inorganic phosphate. The sequence is that of 3-phosphoshikimate 1-carboxyvinyltransferase from Bordetella avium (strain 197N).